Reading from the N-terminus, the 190-residue chain is Large ribosomal subunit protein uL6A (190 aa).

This sequence belongs to the universal ribosomal protein uL6 family. In terms of assembly, component of the large ribosomal subunit (LSU). Mature yeast ribosomes consist of a small (40S) and a large (60S) subunit. The 40S small subunit contains 1 molecule of ribosomal RNA (18S rRNA) and at least 33 different proteins. The large 60S subunit contains 3 rRNA molecules (25S, 5.8S and 5S rRNA) and at least 46 different proteins. uL6 lines the binding pocket for eukaryotic elongation factor 2 (eEF2).

The protein resides in the cytoplasm. The protein localises to the nucleus. Functionally, component of the ribosome, a large ribonucleoprotein complex responsible for the synthesis of proteins in the cell. The small ribosomal subunit (SSU) binds messenger RNAs (mRNAs) and translates the encoded message by selecting cognate aminoacyl-transfer RNA (tRNA) molecules. The large subunit (LSU) contains the ribosomal catalytic site termed the peptidyl transferase center (PTC), which catalyzes the formation of peptide bonds, thereby polymerizing the amino acids delivered by tRNAs into a polypeptide chain. The nascent polypeptides leave the ribosome through a tunnel in the LSU and interact with protein factors that function in enzymatic processing, targeting, and the membrane insertion of nascent chains at the exit of the ribosomal tunnel. The chain is Large ribosomal subunit protein uL6A (rpl901) from Schizosaccharomyces pombe (strain 972 / ATCC 24843) (Fission yeast).